A 131-amino-acid chain; its full sequence is Glycine cleavage system H protein (131 aa).

In terms of domain architecture, Lipoyl-binding spans 24 to 106 (RAIVGVSDHA…YGEGWIMVIE (83 aa)). Lysine 65 is modified (N6-lipoyllysine).

Belongs to the GcvH family. As to quaternary structure, the glycine cleavage system is composed of four proteins: P, T, L and H. (R)-lipoate is required as a cofactor.

The glycine cleavage system catalyzes the degradation of glycine. The H protein shuttles the methylamine group of glycine from the P protein to the T protein. In Xylella fastidiosa (strain Temecula1 / ATCC 700964), this protein is Glycine cleavage system H protein.